The following is a 488-amino-acid chain: MTFNNKTIDELHDLLVKKEISAVELTKATLEDIKSREGAVDAFLTITEDAALAQAAALDEKGIDADNVMAGIPLAVKDNISTKGILTTAASKMLYNYEPIFDATSVAQAYAKDMIIVGKTNMDEFAMGGSNENSAFKPTKNAWDQTKVPGGSSGGSAAAVASGQVRLSLGSDTGGSIRQPAAFNGIVGMKPTYGTVSRFGLIAFGSSLDQIGPFSQTVKENAQLLNVISGHDVKDATSTINEIADFTSKIGQDIKGMKIALPKEYMGEGIDPQVKETILKAAKHLESLGAIIEEVSLPHSKYGVAVYYIIASSEASSNLQRFDGIRYGFRAEDATNLDEIYVKTRSQGFGEEVKRRIMLGTFSLSSGYYDAYFKKAGQVRTLIIQDFEKVFADYDLILGPTAPTVAFGLDTLNHDPVAMYLADLLTIPVNLAGLPGLSIPAGFVEGLPVGLQLIGPKYSEETIYQVAAAFEATTDYHKQQPVIFGGAN.

Residues K77 and S152 each act as charge relay system in the active site. S176 functions as the Acyl-ester intermediate in the catalytic mechanism.

This sequence belongs to the amidase family. GatA subfamily. Heterotrimer of A, B and C subunits.

It catalyses the reaction L-glutamyl-tRNA(Gln) + L-glutamine + ATP + H2O = L-glutaminyl-tRNA(Gln) + L-glutamate + ADP + phosphate + H(+). Functionally, allows the formation of correctly charged Gln-tRNA(Gln) through the transamidation of misacylated Glu-tRNA(Gln) in organisms which lack glutaminyl-tRNA synthetase. The reaction takes place in the presence of glutamine and ATP through an activated gamma-phospho-Glu-tRNA(Gln). This is Glutamyl-tRNA(Gln) amidotransferase subunit A from Streptococcus suis (strain 05ZYH33).